A 488-amino-acid polypeptide reads, in one-letter code: uncharacterized protein (488 aa).

This sequence belongs to the protein kinase superfamily. ADCK protein kinase family.

This is an uncharacterized protein from Mycobacterium tuberculosis (strain CDC 1551 / Oshkosh).